The chain runs to 260 residues: Centromere protein K (260 aa).

Positions 84–173 (EEELQKVKKE…KKLMNALGEF (90 aa)) form a coiled coil.

Belongs to the CENP-K/MCM22 family. In terms of assembly, component of the CENPA-HI complex, at least composed of CENPH, CENPI, CENPK, CENPL, CENPM, CENPO and CENPP.

It is found in the nucleus. The protein resides in the chromosome. It localises to the centromere. Its subcellular location is the kinetochore. Component of the CENPA-HI complex, a centromeric complex involved in assembly of kinetochore proteins, mitotic progression and chromosome segregation. The protein is Centromere protein K (CENPK) of Gallus gallus (Chicken).